We begin with the raw amino-acid sequence, 319 residues long: Exopolyphosphatase 2 (319 aa).

Belongs to the GppA/Ppx family. In terms of assembly, homodimer.

It carries out the reaction [phosphate](n) + H2O = [phosphate](n-1) + phosphate + H(+). Its activity is regulated as follows. Exopolyphosphatase activity is inhibited by ppGpp alarmones produced during the bacterial stringent response. Functionally, degradation of inorganic polyphosphates (polyP). Releases orthophosphate processively from the ends of the polyP chain. Prefers long-chain length polyphosphates as substrates. The chain is Exopolyphosphatase 2 from Mycobacterium tuberculosis (strain CDC 1551 / Oshkosh).